The following is a 170-amino-acid chain: MLQPHLVIGSAFTFGDAFFTLFAFAILLVLIRIYAWKPLMGVMKEREEHIGSEIDAAEESRAQAEQLLAEQKSVLQQARVESQTMIENAKQLGEKEREEIVKTARRESERIKEEAKSDIAREKEDAISALREQVGSLSVLIASKVIEKNLDEKEQSNLIQDYIERLGDDK.

The helical transmembrane segment at 11-31 (AFTFGDAFFTLFAFAILLVLI) threads the bilayer.

Belongs to the ATPase B chain family. As to quaternary structure, F-type ATPases have 2 components, F(1) - the catalytic core - and F(0) - the membrane proton channel. F(1) has five subunits: alpha(3), beta(3), gamma(1), delta(1), epsilon(1). F(0) has three main subunits: a(1), b(2) and c(10-14). The alpha and beta chains form an alternating ring which encloses part of the gamma chain. F(1) is attached to F(0) by a central stalk formed by the gamma and epsilon chains, while a peripheral stalk is formed by the delta and b chains.

The protein localises to the cell membrane. F(1)F(0) ATP synthase produces ATP from ADP in the presence of a proton or sodium gradient. F-type ATPases consist of two structural domains, F(1) containing the extramembraneous catalytic core and F(0) containing the membrane proton channel, linked together by a central stalk and a peripheral stalk. During catalysis, ATP synthesis in the catalytic domain of F(1) is coupled via a rotary mechanism of the central stalk subunits to proton translocation. Its function is as follows. Component of the F(0) channel, it forms part of the peripheral stalk, linking F(1) to F(0). The chain is ATP synthase subunit b from Listeria monocytogenes serotype 4b (strain F2365).